The primary structure comprises 166 residues: Small ribosomal subunit protein uS5 (166 aa).

The S5 DRBM domain occupies 11 to 74; that stretch reads LQEKLIAVNR…EKARRNMINV (64 aa).

It belongs to the universal ribosomal protein uS5 family. Part of the 30S ribosomal subunit. Contacts proteins S4 and S8.

With S4 and S12 plays an important role in translational accuracy. Functionally, located at the back of the 30S subunit body where it stabilizes the conformation of the head with respect to the body. In Haemophilus ducreyi (strain 35000HP / ATCC 700724), this protein is Small ribosomal subunit protein uS5.